Here is a 581-residue protein sequence, read N- to C-terminus: Adenine deaminase (581 aa).

It belongs to the metallo-dependent hydrolases superfamily. Adenine deaminase family. It depends on Mn(2+) as a cofactor.

It carries out the reaction adenine + H2O + H(+) = hypoxanthine + NH4(+). This chain is Adenine deaminase, found in Clostridium botulinum (strain Eklund 17B / Type B).